The following is a 152-amino-acid chain: Dehydratase aurZ (152 aa).

The EthD domain occupies 34–129 (PSLSEKEYRH…APDHVNFADT (96 aa)).

It belongs to the tpcK family.

It catalyses the reaction naphtopyrone YWA1 = norrubrofusarin + H2O + H(+). It participates in pigment biosynthesis. Functionally, dehydratase; part of the gene cluster that mediates the biosynthesis of aurofusarin, a red mycelium pigment which is acting as a mycotoxin. The first step is performed by the polyketide synthase which condenses one acetyl-CoA and 6 malonyl-CoA units to form the first intermediate, the cyclic heptaketide and yellow pigment YWA1. The C2 hydroxyl group in the pyrone ring of YWA1 is probably formed during ring closure by an aldol-type cyclization reaction. The dehydratase aurZ then acts as the first tailoring enzyme in the aurofusarin biosynthetic pathway by converting YWA1 to nor-rubrofusarin. Nor-rubrofusarin is then methylated to rubrofusarin by the O-methyltransferase aurJ. Rubrofusarin is then transported across the plasma membrane by the rubrofusarin-specific pump aurT for further enzymatic processing by the extracellular complex composed of GIP1, aurF, aurO and aurS to yield aurofusarin. The sequence is that of Dehydratase aurZ from Gibberella zeae (strain ATCC MYA-4620 / CBS 123657 / FGSC 9075 / NRRL 31084 / PH-1) (Wheat head blight fungus).